Consider the following 278-residue polypeptide: Transmembrane protein 45B (278 aa).

The next 7 membrane-spanning stretches (helical) occupy residues 7–27, 49–69, 95–115, 117–137, 149–169, 183–203, and 215–235; these read HALP…KYPL, IIEG…EQFV, YLFF…FNIV, LGLD…LFYF, IHSL…LEVI, LLIL…PPFG, and VMFI…ITAI. 2 positions are modified to phosphoserine: serine 273 and serine 275.

Belongs to the TMEM45 family.

It is found in the endosome membrane. Its subcellular location is the lysosome membrane. The protein resides in the golgi apparatus. It localises to the trans-Golgi network membrane. Plays a role in innate immunity. The sequence is that of Transmembrane protein 45B (Tmem45b) from Rattus norvegicus (Rat).